Reading from the N-terminus, the 364-residue chain is GDP-fucose transporter 1 (364 aa).

Helical transmembrane passes span 34-56 (FVLR…ISMV), 76-98 (VTFY…ATCC), 111-130 (LKVA…MITF), 140-162 (VAFY…YLLL), 167-185 (SFYA…WLGV), 195-214 (SWTG…LNAI), 227-249 (IWRL…LLAL), and 264-286 (AHFW…VTGL). The interval 345–364 (MKKTQEEPHPRENEKSNMEV) is disordered.

It belongs to the TPT transporter family. SLC35C subfamily.

Its subcellular location is the golgi apparatus membrane. The enzyme catalyses GMP(out) + GDP-beta-L-fucose(in) = GMP(in) + GDP-beta-L-fucose(out). In terms of biological role, antiporter specific for GDP-l-fucose and depending on the concomitant reverse transport of GMP. Involved in GDP-fucose import from the cytoplasm into the Golgi lumen. This is GDP-fucose transporter 1 (SLC35C1) from Bos taurus (Bovine).